The chain runs to 527 residues: EGF domain-specific O-linked N-acetylglucosamine transferase (527 aa).

A signal peptide spans 1-19 (MLMLLVFGVLLHEVPLSGQ). The Required for optimal activity signature appears at 295-297 (DYD). A glycan (N-linked (GlcNAc...) asparagine) is linked at N354. Positions 524-527 (HDEL) match the Prevents secretion from ER motif.

The protein belongs to the glycosyltransferase 61 family.

The protein resides in the endoplasmic reticulum lumen. The enzyme catalyses L-seryl-[protein] + UDP-N-acetyl-alpha-D-glucosamine = 3-O-(N-acetyl-beta-D-glucosaminyl)-L-seryl-[protein] + UDP + H(+). The catalysed reaction is L-threonyl-[protein] + UDP-N-acetyl-alpha-D-glucosamine = 3-O-(N-acetyl-beta-D-glucosaminyl)-L-threonyl-[protein] + UDP + H(+). Catalyzes the transfer of a single N-acetylglucosamine from UDP-GlcNAc to a serine or threonine residue in extracellular proteins resulting in their modification with a beta-linked N-acetylglucosamine (O-GlcNAc). Specifically glycosylates the Thr residue located between the fifth and sixth conserved cysteines of folded EGF-like domains. The chain is EGF domain-specific O-linked N-acetylglucosamine transferase (Eogt) from Rattus norvegicus (Rat).